The sequence spans 353 residues: MSTPMDIKNALNRVVNQLDLTTEEMSDVMREIMTGQCTEAQIGAFLMGMRMKSETIDEIVGAVSVMRELAGKVELKTLDGVVDIVGTGGDGANIFNVSTASAFVIAAAGCTVAKHGNRAVSGKSGSADLLEAAGVYLNLTPVQVARCIDSVGIGFMFAQSHHTAMKHTAGPRRELGLRTLFNMLGPLTNPAGVRHQIVGVFNQALCRPLAEVLLRLGSKHVLVVHSQDGLDEFSLAAPTFVAELKNGEVTEYWVQPEDLGIKSQSLYGLAVESPAASLELIRDALGRRKTENGQKAAEMIVLNAGAALYAADHATSLKEGVALAHDALHTGLAREKLEELGAFTAVFKQENEA.

Residues G86, 89 to 90 (GD), 96 to 99 (NVST), 114 to 122 (KHGNRAVSG), and S126 contribute to the 5-phospho-alpha-D-ribose 1-diphosphate site. G86 provides a ligand contact to anthranilate. Position 98 (S98) interacts with Mg(2+). N117 provides a ligand contact to anthranilate. R172 is a binding site for anthranilate. Mg(2+) is bound by residues D231 and E232.

This sequence belongs to the anthranilate phosphoribosyltransferase family. In terms of assembly, homodimer. It depends on Mg(2+) as a cofactor.

The enzyme catalyses N-(5-phospho-beta-D-ribosyl)anthranilate + diphosphate = 5-phospho-alpha-D-ribose 1-diphosphate + anthranilate. It participates in amino-acid biosynthesis; L-tryptophan biosynthesis; L-tryptophan from chorismate: step 2/5. Its function is as follows. Catalyzes the transfer of the phosphoribosyl group of 5-phosphorylribose-1-pyrophosphate (PRPP) to anthranilate to yield N-(5'-phosphoribosyl)-anthranilate (PRA). This is Anthranilate phosphoribosyltransferase from Pseudomonas syringae pv. syringae (strain B728a).